Here is a 341-residue protein sequence, read N- to C-terminus: Type II restriction enzyme BgcI specificity subunit S.BcgI (341 aa).

It belongs to the type-I restriction system S methylase family. Heterotrimer of two A and one B subunit. Both subunits are necessary for DNA-binding, which is sequence non-specific. Mg(2+) is required as a cofactor.

It catalyses the reaction Endonucleolytic cleavage of DNA to give specific double-stranded fragments with terminal 5'-phosphates.. With respect to regulation, DNA restriction requires S-adenosyl-L-methionine and Mg(2+), and is inhibited by S-adenosyl-homocysteine. SAM may be a cofactor for DNA restriction. In terms of biological role, the specificity subunit. A B, G, H and S subtype restriction enzyme that recognizes the double-stranded sequence 5'-CGAN(6)TGC-3' and cleaves bilaterally and symmetrically 10 base pairs upstream and 12 base pairs downstream of the sequence to release a 34-base pair fragment. Methylation of the recognition sequence occurs on the adenine in either one or both strands; seems to methylate restricted DNA. This subunit degrades DNA in a non-specific manner. The polypeptide is Type II restriction enzyme BgcI specificity subunit S.BcgI (Heyndrickxia coagulans (Weizmannia coagulans)).